A 295-amino-acid polypeptide reads, in one-letter code: Elongation factor Ts (295 aa).

Positions 80 to 83 (TDFV) are involved in Mg(2+) ion dislocation from EF-Tu.

It belongs to the EF-Ts family.

Its subcellular location is the cytoplasm. Functionally, associates with the EF-Tu.GDP complex and induces the exchange of GDP to GTP. It remains bound to the aminoacyl-tRNA.EF-Tu.GTP complex up to the GTP hydrolysis stage on the ribosome. The chain is Elongation factor Ts from Lysinibacillus sphaericus (strain C3-41).